The following is a 519-amino-acid chain: MSRQFSSQSAFSSRSRRVYSTRSSSGFGGGRQILVSVGQSRRCGGDYGGGFSSRSLYSLGGSKSIFGGLVGRSASGFCQSRGAGGGFGGGFGGGRSFGGGGFGGGYGGGGRFGGGFGGGFGTSNFGLGGFGPSYPPGGIHEVTVNQSLLEPLHLEVDPEIQKIKTQEREQIKTLNNKFASFIDKVRFLEQQNQVLQTKWELLQQVNTSTRTSSLEPIFEEFINQLQRQVDVLTNEQLRQNSEIRSMQDIVEDYKNKYEDEINKRTNSENDFVVLKKDVDAAFMAKSDLQSRVDTLYGEINFLKYLFDTELSQIQTHVSDTNVILSMDNNRSLDLDSIINAVRTQYELIAQKSKDEAEALYQTKYQELQITAGKHGDDLKNSKMEISELNRNAQRLQAEIANIKKQIEQMHGSISDAEERGERALQDAKQKLQETEEALQQMKEDLARLLRDYQALLGAKLSLDVEIATYRELLEGEESRMSGALQSQVSIWALPSNEGNDLGERLHDPQSQVPVPKLGC.

Residues 1–166 (MSRQFSSQSA…DPEIQKIKTQ (166 aa)) form a head region. Omega-N-methylarginine occurs at positions 81 and 95. The coil 1A stretch occupies residues 167–202 (EREQIKTLNNKFASFIDKVRFLEQQNQVLQTKWELL). An IF rod domain is found at 167 to 480 (EREQIKTLNN…ELLEGEESRM (314 aa)). A linker 1 region spans residues 203 to 221 (QQVNTSTRTSSLEPIFEEF). The coil 1B stretch occupies residues 222–313 (INQLQRQVDV…YLFDTELSQI (92 aa)). Positions 314–337 (QTHVSDTNVILSMDNNRSLDLDSI) are linker 12. Positions 338–476 (INAVRTQYEL…ATYRELLEGE (139 aa)) are coil 2. Residues 477–519 (ESRMSGALQSQVSIWALPSNEGNDLGERLHDPQSQVPVPKLGC) are tail. A disordered region spans residues 499-519 (NDLGERLHDPQSQVPVPKLGC).

Belongs to the intermediate filament family. In terms of processing, undergoes deimination of some arginine residues (citrullination).

The protein is Keratin, type II cytoskeletal 1b (Krt77) of Rattus norvegicus (Rat).